The primary structure comprises 319 residues: Methionyl-tRNA formyltransferase (319 aa).

A (6S)-5,6,7,8-tetrahydrofolate-binding site is contributed by 115–118; that stretch reads SLLP.

Belongs to the Fmt family.

The catalysed reaction is L-methionyl-tRNA(fMet) + (6R)-10-formyltetrahydrofolate = N-formyl-L-methionyl-tRNA(fMet) + (6S)-5,6,7,8-tetrahydrofolate + H(+). Attaches a formyl group to the free amino group of methionyl-tRNA(fMet). The formyl group appears to play a dual role in the initiator identity of N-formylmethionyl-tRNA by promoting its recognition by IF2 and preventing the misappropriation of this tRNA by the elongation apparatus. The chain is Methionyl-tRNA formyltransferase from Lactococcus lactis subsp. lactis (strain IL1403) (Streptococcus lactis).